The following is a 245-amino-acid chain: uncharacterized protein (245 aa).

It to M.tuberculosis Rv2927c.

This is an uncharacterized protein from Mycobacterium leprae (strain TN).